The primary structure comprises 250 residues: uncharacterized protein (250 aa).

This is an uncharacterized protein from Mycobacterium tuberculosis (strain CDC 1551 / Oshkosh).